Here is a 577-residue protein sequence, read N- to C-terminus: Nuclear fusion protein tht1 (577 aa).

Residues 1-29 (MKFHPTRPFGLYFEFFIIISFFFTSESTG) form the signal peptide. Residues 30 to 404 (DVESFMKYSN…MNVYFKGLSN (375 aa)) are Lumenal-facing. 2 N-linked (GlcNAc...) asparagine glycosylation sites follow: Asn-163 and Asn-372. Residues 405–425 (IISSFAFIGFTLFATLSSLFF) traverse the membrane as a helical segment. Over 426–433 (KVLKIHRR) the chain is Cytoplasmic. Residues 434–454 (PIIVFGSLSIIFIHIYCFKIT) traverse the membrane as a helical segment. The Lumenal segment spans residues 455–470 (SWVNLYGWITCTIART). The chain crosses the membrane as a helical span at residues 471–491 (LSFIKLNIRTFYLTAFLCALL). Residues 492–577 (NFLRYLKYRN…ESLEQSPWWD (86 aa)) lie on the Cytoplasmic side of the membrane.

It belongs to the KAR5 family. In terms of processing, N-glycosylated.

The protein localises to the endoplasmic reticulum membrane. The protein resides in the nucleus membrane. In terms of biological role, required for nuclear membrane fusion during karyogamy. The chain is Nuclear fusion protein tht1 (tht1) from Schizosaccharomyces pombe (strain 972 / ATCC 24843) (Fission yeast).